The sequence spans 151 residues: NPC intracellular cholesterol transporter 2 (151 aa).

A signal peptide spans 1–19; it reads MRFLAATFLLLALSTAAQA. Intrachain disulfides connect Cys27–Cys140, Cys42–Cys47, and Cys93–Cys99. The N-linked (GlcNAc...) asparagine glycan is linked to Asn58. Lys116 carries the post-translational modification N6-acetyllysine. A glycan (N-linked (GlcNAc...) asparagine) is linked at Asn135.

It belongs to the NPC2 family. As to quaternary structure, interacts with NPC1 (via the second lumenal domain) in a cholestrol-dependent manner. Interacts with NUS1/NgBR, the interaction stabilizes NCP2 and regulates cholesterol trafficking. Interacts with DHDDS. Interacts with NEDD4L (via C2 domain). Interacts with NPC1L1. In terms of tissue distribution, detected in gallbladder bile. Detected in fibroblasts, kidney, liver, spleen, small intestine, placenta and testis (at protein level). Epididymis.

It is found in the secreted. Its subcellular location is the endoplasmic reticulum. It localises to the lysosome. It carries out the reaction cholesterol(in) = cholesterol(out). Functionally, intracellular cholesterol transporter which acts in concert with NPC1 and plays an important role in the egress of cholesterol from the lysosomal compartment. Unesterified cholesterol that has been released from LDLs in the lumen of the late endosomes/lysosomes is transferred by NPC2 to the cholesterol-binding pocket in the N-terminal domain of NPC1. May bind and mobilize cholesterol that is associated with membranes. NPC2 binds cholesterol with a 1:1 stoichiometry. Can bind a variety of sterols, including lathosterol, desmosterol and the plant sterols stigmasterol and beta-sitosterol. The secreted form of NCP2 regulates biliary cholesterol secretion via stimulation of ABCG5/ABCG8-mediated cholesterol transport. In Homo sapiens (Human), this protein is NPC intracellular cholesterol transporter 2.